We begin with the raw amino-acid sequence, 265 residues long: Small ribosomal subunit protein uS2 (265 aa).

The segment at 226–265 (AAAPNSASVREEEFSADAADEGKGRRAPAKKGDKKADAAE) is disordered. The segment covering 245-265 (DEGKGRRAPAKKGDKKADAAE) has biased composition (basic and acidic residues).

Belongs to the universal ribosomal protein uS2 family.

This is Small ribosomal subunit protein uS2 from Xanthomonas axonopodis pv. citri (strain 306).